A 204-amino-acid chain; its full sequence is MSSLLNISHCSYHGYSGLTSRGGINTVENHRWVWHNNGVRLSFPRAESSINITMGCTLQRGIAKSLSQENLVELSDENDDLCPVECVTEFKTDDELLSVLEKSKETNSLVVVDFYRTACGSCKYIEQGFSKLCKQSGDQEAPVIFLKHNVVDEYDEQSEVAERLRIKAVPLFHFYKNGVLLESFATRDKERIDAAILKYTSSES.

The transit peptide at 1–27 (MSSLLNISHCSYHGYSGLTSRGGINTV) directs the protein to the chloroplast. In terms of domain architecture, Thioredoxin spans 63–201 (AKSLSQENLV…IDAAILKYTS (139 aa)). Catalysis depends on nucleophile residues Cys119 and Cys122. An intrachain disulfide couples Cys119 to Cys122.

This sequence belongs to the thioredoxin family.

It is found in the plastid. The protein resides in the chloroplast. Its function is as follows. Probable thiol-disulfide oxidoreductase that may participate in various redox reactions. This chain is Thioredoxin-like 4, chloroplastic, found in Arabidopsis thaliana (Mouse-ear cress).